The following is a 593-amino-acid chain: Arginine--tRNA ligase (593 aa).

The short motif at 138-148 (ANPTGPLHVGH) is the 'HIGH' region element.

It belongs to the class-I aminoacyl-tRNA synthetase family. In terms of assembly, monomer.

The protein localises to the cytoplasm. The catalysed reaction is tRNA(Arg) + L-arginine + ATP = L-arginyl-tRNA(Arg) + AMP + diphosphate. The sequence is that of Arginine--tRNA ligase from Burkholderia lata (strain ATCC 17760 / DSM 23089 / LMG 22485 / NCIMB 9086 / R18194 / 383).